Reading from the N-terminus, the 398-residue chain is LL-diaminopimelate aminotransferase (398 aa).

Tyr-14 and Gly-41 together coordinate substrate. Pyridoxal 5'-phosphate-binding positions include Tyr-71, Ala-104 to Lys-105, Tyr-128, Asn-174, Tyr-205, and Ser-233 to Ser-235. Residues Lys-105, Tyr-128, and Asn-174 each contribute to the substrate site. N6-(pyridoxal phosphate)lysine is present on Lys-236. Arg-244 and Asn-275 together coordinate pyridoxal 5'-phosphate. Asn-275 and Arg-368 together coordinate substrate.

This sequence belongs to the class-I pyridoxal-phosphate-dependent aminotransferase family. LL-diaminopimelate aminotransferase subfamily. As to quaternary structure, homodimer. The cofactor is pyridoxal 5'-phosphate.

The catalysed reaction is (2S,6S)-2,6-diaminopimelate + 2-oxoglutarate = (S)-2,3,4,5-tetrahydrodipicolinate + L-glutamate + H2O + H(+). The protein operates within amino-acid biosynthesis; L-lysine biosynthesis via DAP pathway; LL-2,6-diaminopimelate from (S)-tetrahydrodipicolinate (aminotransferase route): step 1/1. Functionally, involved in the synthesis of meso-diaminopimelate (m-DAP or DL-DAP), required for both lysine and peptidoglycan biosynthesis. Catalyzes the direct conversion of tetrahydrodipicolinate to LL-diaminopimelate. The chain is LL-diaminopimelate aminotransferase from Chlamydia felis (strain Fe/C-56) (Chlamydophila felis).